The sequence spans 612 residues: Indole-3-acetic acid-amido synthetase GH3.5 (612 aa).

The protein belongs to the IAA-amido conjugating enzyme family.

Catalyzes the synthesis of indole-3-acetic acid (IAA)-amino acid conjugates, providing a mechanism for the plant to cope with the presence of excess auxin. Strongly reactive with Glu, Gln, Trp, Asp, Ala, Leu, Phe, Gly, Tyr, Met, Ile and Val. Little or no product formation with His, Ser, Thr, Arg, Lys, or Cys. Also active on pyruvic and butyric acid analogs of IAA, PAA and the synthetic auxin naphthaleneacetic acid (NAA). The two chlorinated synthetic auxin herbicides 2,4-D and 3,6-dichloro-o-anisic acid (dicamba) cannot be used as substrates. In Arabidopsis thaliana (Mouse-ear cress), this protein is Indole-3-acetic acid-amido synthetase GH3.5 (GH3.5).